Here is a 375-residue protein sequence, read N- to C-terminus: MNCVSRLKCLISKARSFARLGGESTLSQPPSLASAAFSSSAVMNGLETHNTRLCIVGSGPAAHTAAIYAARAELKPLLFEGWMANDIAPGGQLTTTTDVENFPGFPEGILGVELTDKFRKQSERFGTTIFTETVTKVDFSSKPFKLFTDSKAILADAVILATGAVAKRLSFVGSGEASGGFWNRGISACAVCDGAAPIFRNKPLAVIGGGDSAMEEANFLTKYGSKVYIIHRRDAFRASKIMQQRALSNPKIDVIWNSSVVEAYGDGERDVLGGLKVKNVVTGDVSDLKVSGLFFAIGHEPATKFLDGGVELDSDGYVVTKPGTTQTSVPGVFAAGDVQDKKYRQAITAAGTGCMAALDAEHYLQEIGSQQGKSD.

A mitochondrion-targeting transit peptide spans 1–37 (MNCVSRLKCLISKARSFARLGGESTLSQPPSLASAAF). Residues 58–61 (SGPA), 79–80 (FE), 87–92 (IAPGGQ), Asn101, Val134, Cys192, Asp337, and 344–346 (RQA) contribute to the FAD site. Cys189 and Cys192 are joined by a disulfide.

This sequence belongs to the class-II pyridine nucleotide-disulfide oxidoreductase family. As to quaternary structure, homodimer. FAD is required as a cofactor. In terms of tissue distribution, ubiquitous.

The protein localises to the cytoplasm. Its subcellular location is the mitochondrion. It catalyses the reaction [thioredoxin]-dithiol + NADP(+) = [thioredoxin]-disulfide + NADPH + H(+). Functionally, NADPH-dependent thioredoxin-disulfide reductase that reduces thioredoxins O1, O2 and F3. In Arabidopsis thaliana (Mouse-ear cress), this protein is Thioredoxin reductase 1, mitochondrial (NTR1).